The primary structure comprises 462 residues: CCA-adding enzyme (462 aa).

The ATP site is built by S54 and R57. Positions 54 and 57 each coordinate CTP. Mg(2+) is bound by residues D66, D68, and D117. ATP-binding residues include H140, K160, and Y169. Residues H140, K160, and Y169 each coordinate CTP.

This sequence belongs to the tRNA nucleotidyltransferase/poly(A) polymerase family. Archaeal CCA-adding enzyme subfamily. In terms of assembly, homodimer. Requires Mg(2+) as cofactor.

The enzyme catalyses a tRNA precursor + 2 CTP + ATP = a tRNA with a 3' CCA end + 3 diphosphate. It carries out the reaction a tRNA with a 3' CCA end + 2 CTP + ATP = a tRNA with a 3' CCACCA end + 3 diphosphate. In terms of biological role, catalyzes the addition and repair of the essential 3'-terminal CCA sequence in tRNAs without using a nucleic acid template. Adds these three nucleotides in the order of C, C, and A to the tRNA nucleotide-73, using CTP and ATP as substrates and producing inorganic pyrophosphate. tRNA 3'-terminal CCA addition is required both for tRNA processing and repair. Also involved in tRNA surveillance by mediating tandem CCA addition to generate a CCACCA at the 3' terminus of unstable tRNAs. While stable tRNAs receive only 3'-terminal CCA, unstable tRNAs are marked with CCACCA and rapidly degraded. This Halorubrum lacusprofundi (strain ATCC 49239 / DSM 5036 / JCM 8891 / ACAM 34) protein is CCA-adding enzyme.